We begin with the raw amino-acid sequence, 240 residues long: Protein GUCD1 (240 aa).

This is Protein GUCD1 (GUCD1) from Homo sapiens (Human).